A 228-amino-acid polypeptide reads, in one-letter code: FAS1 domain-containing protein NCU02579 (228 aa).

A signal peptide spans 1 to 18 (MRFTPYLVLAPTAAVAFA). Residues 50–74 (PAVGLGPAMPPSGAPQADGPANAGG) form a disordered region. Residues 77 to 225 (SVMLSDVMGR…GEVWILKGVR (149 aa)) form the FAS1 domain.

It is found in the vacuole. This Neurospora crassa (strain ATCC 24698 / 74-OR23-1A / CBS 708.71 / DSM 1257 / FGSC 987) protein is FAS1 domain-containing protein NCU02579.